The primary structure comprises 311 residues: Homeobox-leucine zipper protein HOX1 (311 aa).

2 disordered regions span residues 29 to 69 (AGGA…SDHR) and 97 to 160 (AETT…KKLR). Residues 119 to 145 (SSPNSTLSSLSGKRGAPSAATAAAAAA) show a composition bias toward low complexity. A DNA-binding region (homeobox) is located at residues 154 to 213 (GSRKKLRLSKDQAAVLEDTFKEHNTLNPKQKAALARQLNLKPRQVEVWFQNRRARTKLKQ). The interval 212 to 256 (KQTEVDCELLKRCCETLTDENRRLHRELQELRALKLATAAAAPHH) is leucine-zipper. The interval 279–311 (SAATTTRNNSGAAPARPVPTRPWPPAAAQRSSA) is disordered. Residues 280–289 (AATTTRNNSG) show a composition bias toward polar residues. A compositionally biased stretch (pro residues) spans 294-303 (RPVPTRPWPP).

The protein belongs to the HD-ZIP homeobox family. Class II subfamily. As to quaternary structure, homodimer. May form a heterodimer with HOX2, HOX3 or HOX7. In terms of tissue distribution, expressed in root provascular and vascular cylinder, provascular and vascular strands of leaves, provascular and vascular strands of the whole panicle, in mature embryo provascular bundles of scutellum and embryonic axis and provascular and vascular strands of young immature spikelet organs. Expressed in differentiating and differentiated xylem and phloem elements, and in outer and inner bundle sheath cells of all vascular bundles. Expressed in auricles, ligules, culm, guard cells brac hairs and pollen.

It is found in the nucleus. In terms of biological role, probable transcription repressor involved leaf development. Binds to the DNA sequence 5'-CAAT[GC]ATTG-3'. May act as a regulatory switch to specify provascular cell fate. The protein is Homeobox-leucine zipper protein HOX1 (HOX1) of Oryza sativa subsp. japonica (Rice).